Here is a 473-residue protein sequence, read N- to C-terminus: GTPase Der (473 aa).

EngA-type G domains lie at 3–167 (LTIA…GKDK) and 204–379 (IRIA…RIWN). Residues 9–16 (GRPNVGKS), 56–60 (DTAGL), 119–122 (NKSE), 210–217 (GRPNTGKS), 257–261 (DTAGL), and 322–325 (NKWD) each bind GTP. The KH-like domain occupies 380–464 (RRISTGKLNR…PIRLSLRTSD (85 aa)).

The protein belongs to the TRAFAC class TrmE-Era-EngA-EngB-Septin-like GTPase superfamily. EngA (Der) GTPase family. Associates with the 50S ribosomal subunit.

Its function is as follows. GTPase that plays an essential role in the late steps of ribosome biogenesis. The protein is GTPase Der of Bartonella bacilliformis (strain ATCC 35685 / KC583 / Herrer 020/F12,63).